The primary structure comprises 340 residues: tRNA N6-adenosine threonylcarbamoyltransferase (340 aa).

Fe cation contacts are provided by histidine 111 and histidine 115. Substrate-binding positions include 134–138, aspartate 167, glycine 180, and asparagine 276; that span reads LVSGG. Aspartate 304 contributes to the Fe cation binding site.

Belongs to the KAE1 / TsaD family. Fe(2+) serves as cofactor.

The protein resides in the cytoplasm. It carries out the reaction L-threonylcarbamoyladenylate + adenosine(37) in tRNA = N(6)-L-threonylcarbamoyladenosine(37) in tRNA + AMP + H(+). In terms of biological role, required for the formation of a threonylcarbamoyl group on adenosine at position 37 (t(6)A37) in tRNAs that read codons beginning with adenine. Is involved in the transfer of the threonylcarbamoyl moiety of threonylcarbamoyl-AMP (TC-AMP) to the N6 group of A37, together with TsaE and TsaB. TsaD likely plays a direct catalytic role in this reaction. This Helicobacter pylori (strain J99 / ATCC 700824) (Campylobacter pylori J99) protein is tRNA N6-adenosine threonylcarbamoyltransferase.